A 470-amino-acid polypeptide reads, in one-letter code: 24-hydroxycholesterol 7-alpha-hydroxylase (470 aa).

2 helical membrane-spanning segments follow: residues 3 to 23 and 270 to 290; these read IMEL…LFLF and VVLW…LGYI. Heme is bound at residue Cys-415.

This sequence belongs to the cytochrome P450 family. The cofactor is heme. Liver specific. Hepatic expression is sexually dimorphic (female &gt; male).

Its subcellular location is the endoplasmic reticulum membrane. The protein localises to the microsome membrane. The enzyme catalyses (24S)-hydroxycholesterol + reduced [NADPH--hemoprotein reductase] + O2 = (24S)-7alpha-dihydroxycholesterol + oxidized [NADPH--hemoprotein reductase] + H2O + H(+). It functions in the pathway steroid metabolism; cholesterol degradation. The protein operates within lipid metabolism; bile acid biosynthesis. Functionally, a cytochrome P450 monooxygenase involved in neural cholesterol clearance through bile acid synthesis. Catalyzes 7-alpha hydroxylation of (24S)-hydroxycholesterol, a neural oxysterol that is metabolized to bile acids in the liver. Mechanistically, uses molecular oxygen inserting one oxygen atom into a substrate, and reducing the second into a water molecule, with two electrons provided by NADPH via cytochrome P450 reductase (CPR; NADPH-ferrihemoprotein reductase). The sequence is that of 24-hydroxycholesterol 7-alpha-hydroxylase (Cyp39a1) from Mus musculus (Mouse).